Consider the following 433-residue polypeptide: ATP-sensitive inward rectifier potassium channel 12 (433 aa).

Residues 1-77 (MTAASRANPY…LADMFTTCVD (77 aa)) lie on the Cytoplasmic side of the membrane. S-nitrosocysteine is present on Cys75. Residues 78-104 (IRWRYMLLIFSLAFLASWLLFGIIFWV) traverse the membrane as a helical segment. Residues Arg79 and Arg81 each contribute to the a 1,2-diacyl-sn-glycero-3-phospho-(1D-myo-inositol-4,5-bisphosphate) site. Over 105 to 129 (IAVAHGDLEPAEGRGRTPCVMQVHG) the chain is Extracellular. Cys123 and Cys155 are oxidised to a cystine. The helical; Pore-forming intramembrane region spans 130-146 (FMAAFLFSIETQTTIGY). Positions 143, 144, 145, and 146 each coordinate K(+). A Selectivity filter motif is present at residues 143 to 148 (TIGYGL). Topologically, residues 147-155 (GLRCVTEEC) are extracellular. A helical membrane pass occupies residues 156–183 (PVAVFMVVAQSIVGCIIDSFMIGAIMAK). Residues Lys183 and Lys188 each coordinate a 1,2-diacyl-sn-glycero-3-phospho-(1D-myo-inositol-4,5-bisphosphate). The Cytoplasmic portion of the chain corresponds to 184–433 (MARPKKRAQT…QRPYRRESEI (250 aa)). Residues 387–433 (DEEDEADGDQDGRSRDGLSPQARHDFDRLQAGGGVLEQRPYRRESEI) form a disordered region. The span at 396-414 (QDGRSRDGLSPQARHDFDR) shows a compositional bias: basic and acidic residues. The short motif at 431–433 (SEI) is the PDZ-binding element.

It belongs to the inward rectifier-type potassium channel (TC 1.A.2.1) family. KCNJ12 subfamily. In terms of assembly, homotetramer. Forms heteromer with KCNJ4. Can form heteromeric channels with Kir2.6/KCNJ18. Association, via its PDZ-recognition domain, with LIN7A, LIN7B, LIN7C, DLG1, CASK and APBA1 plays a key role in its localization and trafficking.

The protein localises to the membrane. It is found in the cell membrane. Its subcellular location is the sarcolemma. It localises to the T-tubule. The catalysed reaction is K(+)(in) = K(+)(out). Its activity is regulated as follows. Activated by phosphatidylinositol 4,5-biphosphate (PtdIns(4,5)P2). PtdIns(4,5)P2 binding to the cytoplasmic side of the channel triggers a conformation change leading to channel opening. Inhibited by Ba(2+). Functionally, inward rectifying potassium channel that probably participates in controlling the resting membrane potential in electrically excitable cells. Probably participates in establishing action potential waveform and excitability of neuronal and muscle tissues. Inward rectifier potassium channels are characterized by a greater tendency to allow potassium to flow into the cell rather than out of it. Their voltage dependence is regulated by the concentration of extracellular potassium; as external potassium is raised, the voltage range of the channel opening shifts to more positive voltages. The inward rectification is mainly due to the blockage of outward current by internal magnesium. The sequence is that of ATP-sensitive inward rectifier potassium channel 12 (KCNJ12) from Homo sapiens (Human).